Reading from the N-terminus, the 278-residue chain is Octanoyl-[GcvH]:protein N-octanoyltransferase (278 aa).

The BPL/LPL catalytic domain occupies 41-247 (LVSPPTIRTW…LLHRLAGEVH (207 aa)). The active-site Acyl-thioester intermediate is the C146.

The protein belongs to the octanoyltransferase LipL family.

It carries out the reaction N(6)-octanoyl-L-lysyl-[glycine-cleavage complex H protein] + L-lysyl-[lipoyl-carrier protein] = N(6)-octanoyl-L-lysyl-[lipoyl-carrier protein] + L-lysyl-[glycine-cleavage complex H protein]. Its pathway is protein modification; protein lipoylation via endogenous pathway; protein N(6)-(lipoyl)lysine from octanoyl-[acyl-carrier-protein]. In terms of biological role, catalyzes the amidotransfer (transamidation) of the octanoyl moiety from octanoyl-GcvH to the lipoyl domain of the E2 subunit of lipoate-dependent enzymes. The protein is Octanoyl-[GcvH]:protein N-octanoyltransferase of Lysinibacillus sphaericus (strain C3-41).